Reading from the N-terminus, the 1040-residue chain is Multidrug resistance protein MdtB (1040 aa).

12 helical membrane passes run 25-45, 347-367, 369-389, 396-416, 440-460, 472-492, 537-557, 863-883, 888-908, 910-930, 968-988, and 998-1018; these read LLMA…PVAA, LMLA…NIPA, IIPG…MVFL, LTLM…IVVI, IGFT…PLLF, FAVT…TLTP, WLTL…WIVI, LGST…VLGV, FIHP…ALLA, IIAG…LIGI, ILMT…STGV, and IAMV…TPVI.

The protein belongs to the resistance-nodulation-cell division (RND) (TC 2.A.6) family. MdtB subfamily. In terms of assembly, part of a tripartite efflux system composed of MdtA, MdtB and MdtC. MdtB forms a heteromultimer with MdtC.

The protein localises to the cell inner membrane. The protein is Multidrug resistance protein MdtB of Salmonella dublin (strain CT_02021853).